Reading from the N-terminus, the 563-residue chain is Testis-expressed basic protein 1 (563 aa).

The helical transmembrane segment at 3–23 threads the bilayer; it reads VLEITLAVILTLLGLAILAIL. The disordered stretch occupies residues 56-81; it reads GSRHAYSTQSDTSYDNRERSKRDYTP. Positions 69–79 are enriched in basic and acidic residues; it reads YDNRERSKRDY. The helical transmembrane segment at 99-119 threads the bilayer; the sequence is ELILLLMCFILALSRSSIGSI. The tract at residues 311–563 is disordered; it reads SEMSIPQGQG…GRKYNKKVEE (253 aa). Positions 367-383 are enriched in basic and acidic residues; that stretch reads QVEKSEMGVPRRQESQV. Residues 384–395 are compositionally biased toward low complexity; that stretch reads KKSQSGVSKGQE. Basic and acidic residues-rich tracts occupy residues 412 to 447 and 485 to 544; these read QVEK…KKSE and EAQE…EKSK.

It localises to the membrane. The chain is Testis-expressed basic protein 1 from Homo sapiens (Human).